The following is a 131-amino-acid chain: Proteinase inhibitor (131 aa).

The first 26 residues, 1–26 (MSASAKLSRMVCLLCGFFSTGISMAS), serve as a signal peptide directing secretion. Cys51 and Cys74 are oxidised to a cystine.

Belongs to the protease inhibitor I38 family.

It is found in the periplasm. In terms of biological role, inhibitor of the alkaline protease. It forms a non-covalent bond with the protease and may prevent its autocatalytic cleavage in the periplasm. The polypeptide is Proteinase inhibitor (inh) (Pseudomonas aeruginosa (strain ATCC 15692 / DSM 22644 / CIP 104116 / JCM 14847 / LMG 12228 / 1C / PRS 101 / PAO1)).